We begin with the raw amino-acid sequence, 439 residues long: Ribosomal protein uS12 methylthiotransferase RimO (439 aa).

The MTTase N-terminal domain maps to 5 to 115; the sequence is PKIGFVSLGC…LIEAVHTHAP (111 aa). [4Fe-4S] cluster-binding residues include C14, C50, C79, C146, C150, and C153. A Radical SAM core domain is found at 132 to 369; the sequence is LTPRHYSYLK…MGLQAQISTD (238 aa). One can recognise a TRAM domain in the interval 372-439; the sequence is QRFVGTEQQV…ESTEYDLIAD (68 aa).

It belongs to the methylthiotransferase family. RimO subfamily. Requires [4Fe-4S] cluster as cofactor.

The protein resides in the cytoplasm. The catalysed reaction is L-aspartate(89)-[ribosomal protein uS12]-hydrogen + (sulfur carrier)-SH + AH2 + 2 S-adenosyl-L-methionine = 3-methylsulfanyl-L-aspartate(89)-[ribosomal protein uS12]-hydrogen + (sulfur carrier)-H + 5'-deoxyadenosine + L-methionine + A + S-adenosyl-L-homocysteine + 2 H(+). Catalyzes the methylthiolation of an aspartic acid residue of ribosomal protein uS12. The sequence is that of Ribosomal protein uS12 methylthiotransferase RimO from Francisella tularensis subsp. novicida (strain U112).